The chain runs to 258 residues: uncharacterized protein (258 aa).

6 helical membrane-spanning segments follow: residues 21–41 (LIWL…TIYY), 73–93 (LSQF…GSVA), 119–139 (WLIQ…LAYY), 153–173 (FAAS…AGLA), 182–202 (GAAA…VSLF), and 229–249 (FFGW…VFSV).

It localises to the cell membrane. This is an uncharacterized protein from Bacillus subtilis (strain 168).